The chain runs to 109 residues: ATP-dependent Clp protease adapter protein ClpS (109 aa).

The interval 1 to 23 is disordered; it reads MTERKHDDTGVEEGTGLATKTRP.

Belongs to the ClpS family. In terms of assembly, binds to the N-terminal domain of the chaperone ClpA.

Involved in the modulation of the specificity of the ClpAP-mediated ATP-dependent protein degradation. The protein is ATP-dependent Clp protease adapter protein ClpS of Maricaulis maris (strain MCS10) (Caulobacter maris).